We begin with the raw amino-acid sequence, 1300 residues long: MGYKLKRWPLVAFTFTGIGLGVVLAACSALNTSNLFPRQNRSKQLIGFTENNIIKPEAVLKAALAEDNGTETILRVNFGEALKSWYQNNKDRNIATRLTIFSENVEDEHDNLLDQKQQAEPINWPIELQKEYDQWGGSESSWKALKLYDRLIADFQSLIFSNIVANVQLTDGSDQFKPTTKDNLDSTSNKIKFVNSKPNDPNGEFFANLQAYLFAQWVVEENPLPLTQAFFAYQAPKDGLDSLYDQAAIGSALQLGYAFPAFREPNNGQSQGKTTFDPTPNSAQNFGDFIKAVFPEQKNGQTQQSNTSSRTGLFDWQTKWNTNGAANKLLVTKSNLRGAFKGVGLATAIIDQYEYLVGGSKTSSLPEVKVDSNKSNQNPLDSFFMEGKDAVAIRSIVSRAKIAMTDQTPGFKVNPAFVKVKQSQQNDTFYQNQRKLSGGQSGDNNSQGKHHYLQDAVRLTSSQAMAAASTGADSSSGTNVGGSSGGNSVLIPLPRSAALTHTQQQVQQTTSTLQTPVYARGDDGTYALAIDGGDYFLANNKRDFTKQADILLYRYLQAKSNNFKENGVEFSLNLLESGSLFQTWAQTGLTAKLYGALVAMMGSGQGTQVKGSVQGSSRAASVSVQTTQQNRQQSTDTQESEVVKLAKSLLKSSADLAKPFTDNPTFKKALTDIQSEYKDYLAAAGKLSEFKKDLGEVSGLQQAIIDRADKYIQLEKQAQKSAIGLGQPLPYQRASDGSYPALEKFFIPEDSAADGKVKASESGSAALVTLKTTDSQKSTNTVKQPDIKPTRENNDKKLKQLTSDVETKASSLITKWGATPQIGSQFSEIVSLKSKDNKPQTNMILALLSDVGIKWTKILNSFKEWFFTNTNDFKNNYDSEKKELKGNEYKDFNDLVKQTLYLRSWQRLTSKEKFGYYKELGSVKAQAAQSGMVSLSSSAAVANAVASSGMQKSGDQTLLELGKKAFESELEASSSDGQYKYLRFLSTLMWLVKDGAKNYKRLLQQAITVGTRAFVSWTVSYDDTATASAAAAKAQVAVLKTAQATNTQSDNPFNKFVQNPDYVQGSETNWFNDKSTPIKPDSLLESESTYNFTAEPFDDKTKSQKRSTGGTTNEKHFFGFNGLTINSPQSVSTASAGLTEQIFNNFGQLVTSSDKSGALSQYKDKATLKRLIQNTNSDAELNAFGEVLHRAVNVDTSNLGRFNSSGEPLISFDNKKKFLVDVVDKLDDVYFNKFEGYVGQTKVKMSDSSSSSQGTKTIRKPKPHHSPRTRVSRLWAMSFRLPTRTLTKFLLVEKLIRTVL.

Residues Met1–Ala26 form the signal peptide. The N-palmitoyl cysteine moiety is linked to residue Cys27. Residue Cys27 is the site of S-diacylglycerol cysteine attachment. The span at Ala464–Thr478 shows a compositional bias: low complexity. Disordered regions lie at residues Ala464–Asn487, Ala620–Glu639, Asp774–Lys797, and Lys1244–Thr1269. 2 stretches are compositionally biased toward polar residues: residues Ala620–Thr637 and Asp774–Lys783. Residues Pro785–Lys797 are compositionally biased toward basic and acidic residues. Over residues Thr1257 to Thr1269 the composition is skewed to basic residues.

The protein belongs to the MG307/MG309/MG338 family.

The protein resides in the cell membrane. This is an uncharacterized protein from Mycoplasma pneumoniae (strain ATCC 29342 / M129 / Subtype 1) (Mycoplasmoides pneumoniae).